A 126-amino-acid polypeptide reads, in one-letter code: Small ribosomal subunit protein bS6 (126 aa).

The protein belongs to the bacterial ribosomal protein bS6 family.

Its function is as follows. Binds together with bS18 to 16S ribosomal RNA. The polypeptide is Small ribosomal subunit protein bS6 (Bordetella bronchiseptica (strain ATCC BAA-588 / NCTC 13252 / RB50) (Alcaligenes bronchisepticus)).